The primary structure comprises 91 residues: Small ribosomal subunit protein uS19 (91 aa).

It belongs to the universal ribosomal protein uS19 family.

In terms of biological role, protein S19 forms a complex with S13 that binds strongly to the 16S ribosomal RNA. This is Small ribosomal subunit protein uS19 from Dechloromonas aromatica (strain RCB).